Here is a 935-residue protein sequence, read N- to C-terminus: Transmembrane channel-like protein 1 (935 aa).

Disordered regions lie at residues 1 to 21 and 37 to 204; these read MPRH…DEGK and ERGK…LGSL. Composition is skewed to basic and acidic residues over residues 37–47, 54–79, 109–136, 152–163, and 172–184; these read ERGKIKQASRD, RNGE…EKKH, DKSS…EKDV, NHEKTKQHLKEE, and PETT…KSES. 10 consecutive transmembrane segments (helical) span residues 303-340, 392-423, 480-510, 523-550, 555-589, 633-670, 690-710, 714-736, 751-774, and 818-851; these read SSVA…MGKP, RMPL…ANEE, LTRF…VRRS, WWER…ISTL, PRIA…QLKR, WETM…VRFL, VSGN…GAFY, LPAL…VMCC, NFYM…TIVS, and LVLP…KKKL. A compositionally biased stretch (basic and acidic residues) spans 874-886; the sequence is EQARKAGEQRRNS. The tract at residues 874 to 935 is disordered; that stretch reads EQARKAGEQR…QQPQKNSKKR (62 aa). Composition is skewed to polar residues over residues 899–919 and 926–935; these read SHVS…TSSG and QQPQKNSKKR.

It belongs to the TMC family. In terms of assembly, interacts specifically with isoform CD3 of PCDH15A (via cytoplasmic domain). As to expression, in adults, expression is restricted to the hair cells of inner ear and lateral line organ. Expressed at higher levels in the larval lateral-line neuromasts than in the larval inner ear. Expressed in the sensory hair cell patches of the ear at 4 days post fertilization (dpf).

It is found in the cell membrane. It carries out the reaction Ca(2+)(in) = Ca(2+)(out). Pore-forming subunit of the mechanotransducer (MET) non-selective cation channel complex located at the tips of hair-cell stereocilia. Highly permeable to calcium and likely transports monovalent cations. In Danio rerio (Zebrafish), this protein is Transmembrane channel-like protein 1.